The primary structure comprises 763 residues: Serine/threonine-protein kinase PknG (763 aa).

Positions 1–32 are disordered; sequence MKREHMDHDTEDVGQAAQRADPPSGTTEGRLQ. A Protein kinase domain is found at 160-406; the sequence is YEVKGCIAHG…SAEEMSAQLM (247 aa). Residues 166–174 and K190 contribute to the ATP site; that span reads IAHGGLGWV. D289 serves as the catalytic Proton acceptor.

Belongs to the protein kinase superfamily. Ser/Thr protein kinase family. Post-translationally, autophosphorylated.

The enzyme catalyses L-seryl-[protein] + ATP = O-phospho-L-seryl-[protein] + ADP + H(+). It catalyses the reaction L-threonyl-[protein] + ATP = O-phospho-L-threonyl-[protein] + ADP + H(+). The polypeptide is Serine/threonine-protein kinase PknG (pknG) (Mycobacterium leprae (strain TN)).